A 1342-amino-acid polypeptide reads, in one-letter code: DNA-directed RNA polymerase subunit beta (1342 aa).

This sequence belongs to the RNA polymerase beta chain family. The RNAP catalytic core consists of 2 alpha, 1 beta, 1 beta' and 1 omega subunit. When a sigma factor is associated with the core the holoenzyme is formed, which can initiate transcription.

The enzyme catalyses RNA(n) + a ribonucleoside 5'-triphosphate = RNA(n+1) + diphosphate. DNA-dependent RNA polymerase catalyzes the transcription of DNA into RNA using the four ribonucleoside triphosphates as substrates. The sequence is that of DNA-directed RNA polymerase subunit beta from Proteus mirabilis (strain HI4320).